We begin with the raw amino-acid sequence, 72 residues long: Translation initiation factor IF-1 (72 aa).

The S1-like domain occupies 1-72 (MSKDDVIEID…DKGRITYRYK (72 aa)).

This sequence belongs to the IF-1 family. As to quaternary structure, component of the 30S ribosomal translation pre-initiation complex which assembles on the 30S ribosome in the order IF-2 and IF-3, IF-1 and N-formylmethionyl-tRNA(fMet); mRNA recruitment can occur at any time during PIC assembly.

Its subcellular location is the cytoplasm. One of the essential components for the initiation of protein synthesis. Stabilizes the binding of IF-2 and IF-3 on the 30S subunit to which N-formylmethionyl-tRNA(fMet) subsequently binds. Helps modulate mRNA selection, yielding the 30S pre-initiation complex (PIC). Upon addition of the 50S ribosomal subunit IF-1, IF-2 and IF-3 are released leaving the mature 70S translation initiation complex. This chain is Translation initiation factor IF-1, found in Campylobacter hominis (strain ATCC BAA-381 / DSM 21671 / CCUG 45161 / LMG 19568 / NCTC 13146 / CH001A).